The sequence spans 118 residues: Large ribosomal subunit protein uL18 (118 aa).

This sequence belongs to the universal ribosomal protein uL18 family. Part of the 50S ribosomal subunit; part of the 5S rRNA/L5/L18/L25 subcomplex. Contacts the 5S and 23S rRNAs.

In terms of biological role, this is one of the proteins that bind and probably mediate the attachment of the 5S RNA into the large ribosomal subunit, where it forms part of the central protuberance. This chain is Large ribosomal subunit protein uL18, found in Myxococcus xanthus (strain DK1622).